We begin with the raw amino-acid sequence, 225 residues long: Membrane protein (225 aa).

Topologically, residues 1-20 (MPNETNCTLDFEQSVQLFKE) are virion surface. The helical transmembrane segment at 21-41 (YNLFITAFLLFLTIILQYGYA) threads the bilayer. The Intravirion segment spans residues 42 to 51 (TRTKVIYTLK). Residues 52–72 (MIVLWCFWPLNIAVGVISCTY) traverse the membrane as a helical segment. At 73 to 77 (PPNTG) the chain is on the virion surface side. Residues 78–98 (GLVVAIILTVFACLSFVGYWI) form a helical membrane-spanning segment. Topologically, residues 99–225 (QSIRLFKRCR…VATGGSSLYT (127 aa)) are intravirion.

The protein belongs to the gammacoronaviruses M protein family. Homomultimer. Interacts with envelope E protein in the budding compartment of the host cell, which is located between endoplasmic reticulum and the Golgi complex. Forms a complex with HE and S proteins. Interacts with nucleocapsid N protein. This interaction probably participates in RNA packaging into the virus.

Its subcellular location is the virion membrane. It is found in the host Golgi apparatus membrane. Component of the viral envelope that plays a central role in virus morphogenesis and assembly via its interactions with other viral proteins. The polypeptide is Membrane protein (Avian infectious bronchitis virus (strain Beaudette US) (IBV)).